Here is a 484-residue protein sequence, read N- to C-terminus: tRNA-2-methylthio-N(6)-dimethylallyladenosine synthase (484 aa).

Residues 36-153 form the MTTase N-terminal domain; sequence GKLYIKTHGC…LPELIRARRE (118 aa). Positions 45, 82, 116, 190, 194, and 197 each coordinate [4Fe-4S] cluster. Positions 176 to 415 constitute a Radical SAM core domain; that stretch reads RAEGPSAFVS…HINAHAASIS (240 aa). Residues 416–479 enclose the TRAM domain; the sequence is QSMVGSVQRV…SNSLRGRIQL (64 aa). Residues 428–450 are disordered; sequence EGPSRRDPNELTGKSENMRPVNF.

This sequence belongs to the methylthiotransferase family. MiaB subfamily. In terms of assembly, monomer. It depends on [4Fe-4S] cluster as a cofactor.

The protein localises to the cytoplasm. The enzyme catalyses N(6)-dimethylallyladenosine(37) in tRNA + (sulfur carrier)-SH + AH2 + 2 S-adenosyl-L-methionine = 2-methylsulfanyl-N(6)-dimethylallyladenosine(37) in tRNA + (sulfur carrier)-H + 5'-deoxyadenosine + L-methionine + A + S-adenosyl-L-homocysteine + 2 H(+). Functionally, catalyzes the methylthiolation of N6-(dimethylallyl)adenosine (i(6)A), leading to the formation of 2-methylthio-N6-(dimethylallyl)adenosine (ms(2)i(6)A) at position 37 in tRNAs that read codons beginning with uridine. In Xanthomonas axonopodis pv. citri (strain 306), this protein is tRNA-2-methylthio-N(6)-dimethylallyladenosine synthase.